A 503-amino-acid polypeptide reads, in one-letter code: Palmitoleoyl-protein carboxylesterase NOTUM (503 aa).

Residues 1–19 (MGGEVRVLLLLGLLHWVGG) form the signal peptide. Residues 23–53 (RKTWRRRGQQPPQPPPPPPLPQRAEVEPGAG) form a disordered region. Over residues 33–43 (PPQPPPPPPLP) the composition is skewed to pro residues. Serine 88 carries the phosphoserine modification. A glycan (N-linked (GlcNAc...) asparagine) is linked at asparagine 103. Catalysis depends on charge relay system residues serine 239, aspartate 347, and histidine 396.

The protein belongs to the pectinacetylesterase family. Notum subfamily. As to expression, widely expressed. Expressed in lung, ovary, kidney, liver and brain. Not detected in thymus, heart, spleen, stomach, skeletal muscle and bone marrow.

It is found in the secreted. It catalyses the reaction [Wnt protein]-O-(9Z)-hexadecenoyl-L-serine + H2O = [Wnt protein]-L-serine + (9Z)-hexadecenoate + H(+). Functionally, carboxylesterase that acts as a key negative regulator of the Wnt signaling pathway by specifically mediating depalmitoleoylation of WNT proteins. Serine palmitoleoylation of WNT proteins is required for efficient binding to frizzled receptors. In Mus musculus (Mouse), this protein is Palmitoleoyl-protein carboxylesterase NOTUM.